Here is a 363-residue protein sequence, read N- to C-terminus: NAD(P)H-quinone oxidoreductase subunit 1, chloroplastic (363 aa).

The next 8 helical transmembrane spans lie at 30–50, 98–118, 127–147, 165–185, 203–223, 248–268, 300–320, and 336–356; these read LVPIVTLVLGITIGVLVIVWL, FSIGPSIAVISIFLSYSVIPF, LSIGVFFWIAISSIAPVGLLM, AAQSISYEIPLALCVLSISLL, FWGWNLWRQPIGFIVFLISSL, YSGIKFGLFYIASYLNLLVSS, VFGTLIGIFITLAKTYLFLFI, and LLNLGWKFLLPISLGNLLLTT.

The protein belongs to the complex I subunit 1 family. NDH is composed of at least 16 different subunits, 5 of which are encoded in the nucleus.

It is found in the plastid. Its subcellular location is the chloroplast thylakoid membrane. It carries out the reaction a plastoquinone + NADH + (n+1) H(+)(in) = a plastoquinol + NAD(+) + n H(+)(out). The catalysed reaction is a plastoquinone + NADPH + (n+1) H(+)(in) = a plastoquinol + NADP(+) + n H(+)(out). Its function is as follows. NDH shuttles electrons from NAD(P)H:plastoquinone, via FMN and iron-sulfur (Fe-S) centers, to quinones in the photosynthetic chain and possibly in a chloroplast respiratory chain. The immediate electron acceptor for the enzyme in this species is believed to be plastoquinone. Couples the redox reaction to proton translocation, and thus conserves the redox energy in a proton gradient. The chain is NAD(P)H-quinone oxidoreductase subunit 1, chloroplastic from Solanum lycopersicum (Tomato).